The primary structure comprises 104 residues: Nucleoid-associated protein Amuc_1227 (104 aa).

It belongs to the YbaB/EbfC family. In terms of assembly, homodimer.

It localises to the cytoplasm. Its subcellular location is the nucleoid. Its function is as follows. Binds to DNA and alters its conformation. May be involved in regulation of gene expression, nucleoid organization and DNA protection. This Akkermansia muciniphila (strain ATCC BAA-835 / DSM 22959 / JCM 33894 / BCRC 81048 / CCUG 64013 / CIP 107961 / Muc) protein is Nucleoid-associated protein Amuc_1227.